The primary structure comprises 123 residues: Defensin beta 118 (123 aa).

The signal sequence occupies residues 1-19; that stretch reads MKLLLLALPMLVLLPQVIP. 3 disulfide bridges follow: Cys-27-Cys-54, Cys-34-Cys-48, and Cys-38-Cys-55. The propeptide occupies 65–123; that stretch reads VPATSPTPLSDSTPGIIDDILTVRFTTDYFEVSSKKDMVEESEAGRGTETSLPNVHHSS. Residues 100–110 are compositionally biased toward basic and acidic residues; it reads KDMVEESEAGR. Residues 100–123 form a disordered region; the sequence is KDMVEESEAGRGTETSLPNVHHSS. Positions 112–123 are enriched in polar residues; sequence TETSLPNVHHSS.

It belongs to the beta-defensin family. Post-translationally, the three-dimensional structure formed by the three intramolecular disulfide bridges is indispensable for antimicrobial activity. In terms of tissue distribution, high-level and epididymis-specific expression. Most abundant in the epithelium of the caput and present in the epididymis lumen and bound to sperm. Also expressed in pancreas.

The protein resides in the secreted. In terms of biological role, host defense peptide that exhibits antimicrobial activity against both Gram-negative bacteria, such as E.coli and S.typhimurium, and Gram-positive bacteria, such as S.aureus and B.subtilis. Inhibits cell adhesion of E.coli on intestinal epithelial enterocytes. Causes rapid permeabilization of both the outer and inner membrane of E.coli, leading to morphological alterations on the bacterial surface. Binds to bacterial lipopolysaccharides (LPS) with high affinity, and may thereby be involved in immunoregulation through LPS neutralization. May contribute to epididymal innate immunity and protect the sperm against attack by microorganisms. The chain is Defensin beta 118 (DEFB118) from Homo sapiens (Human).